We begin with the raw amino-acid sequence, 384 residues long: Ceramide very long chain fatty acid hydroxylase SCS7 (384 aa).

Topologically, residues 1 to 197 (MSTNTSKTLE…NFLEPLTKTA (197 aa)) are cytoplasmic. A Cytochrome b5 heme-binding domain is found at 9 to 90 (LELFSKKTVQ…EDEYLIGYLA (82 aa)). Positions 45 and 72 each coordinate heme. The chain crosses the membrane as a helical span at residues 198-216 (WWVVPVAWLPVVVYHMGVA). Residues 217–221 (LKNMN) are Lumenal-facing. A helical transmembrane segment spans residues 222–246 (QLFACFLFCVGVFVWTLIEYGLHRF). Zn(2+) contacts are provided by H244, H249, H268, H271, and H272. The Cytoplasmic portion of the chain corresponds to 247 to 284 (LFHFDDWLPESNIAFATHFLLHGCHHYLPMDKYRLVMP). A helical membrane pass occupies residues 285–302 (PTLFVILCAPFYKLVFAL). The Lumenal portion of the chain corresponds to 303–304 (LP). A helical transmembrane segment spans residues 305 to 328 (LYWAYAGFAGGLFGYVCYDECHFF). Residues H326, H330, H345, H348, and H349 each contribute to the Zn(2+) site. The Cytoplasmic portion of the chain corresponds to 329–384 (LHHSKLPPFMRKLKKYHLEHHYKNYQLGFGVTSWFWDEVFGTYLGPDAPLSKMKYE).

The protein belongs to the sterol desaturase family. SCS7 subfamily. Zn(2+) serves as cofactor.

Its subcellular location is the endoplasmic reticulum membrane. The enzyme catalyses an N-(1,2 saturated acyl)-(4R)-hydroxysphinganine + 2 Fe(II)-[cytochrome b5] + O2 + 2 H(+) = an N-(2R-hydroxyacyl)-4R-hydroxysphinganine + 2 Fe(III)-[cytochrome b5] + H2O. The catalysed reaction is an N-(1,2-saturated acyl)sphinganine + 2 Fe(II)-[cytochrome b5] + O2 + 2 H(+) = an N-[(2'R)-hydroxyacyl]sphinganine + 2 Fe(III)-[cytochrome b5] + H2O. It carries out the reaction N-hexacosanoyl-(4R)-hydroxysphinganine + 2 Fe(II)-[cytochrome b5] + O2 + 2 H(+) = N-(2-hydroxyhexacosanyl)-(4R)-hydroxysphinganine + 2 Fe(III)-[cytochrome b5] + H2O. It functions in the pathway sphingolipid metabolism. Ceramide hydroxylase involved in the hydroxylation of sphingolipid-associated very long chain fatty acids. Postulated to hydroxylate the very long chain fatty acid of dihydroceramides and phytoceramides at C-2. The protein is Ceramide very long chain fatty acid hydroxylase SCS7 of Saccharomyces cerevisiae (strain ATCC 204508 / S288c) (Baker's yeast).